Consider the following 779-residue polypeptide: Nucleolar complex protein 3 homolog (779 aa).

2 disordered regions span residues methionine 1–threonine 20 and asparagine 100–serine 189. Residues aspartate 114–valine 124 are compositionally biased toward acidic residues. The span at glutamate 136–glutamate 160 shows a compositional bias: basic and acidic residues. Over residues valine 161–aspartate 178 the composition is skewed to acidic residues. The stretch at alanine 434–lysine 474 forms a coiled coil.

The protein belongs to the CBF/MAK21 family.

Its subcellular location is the nucleus. It is found in the nucleolus. This Caenorhabditis briggsae protein is Nucleolar complex protein 3 homolog.